A 150-amino-acid chain; its full sequence is Endoribonuclease YbeY (150 aa).

Zn(2+)-binding residues include His108, His112, and His118.

It belongs to the endoribonuclease YbeY family. Zn(2+) serves as cofactor.

The protein resides in the cytoplasm. Single strand-specific metallo-endoribonuclease involved in late-stage 70S ribosome quality control and in maturation of the 3' terminus of the 16S rRNA. This Methylococcus capsulatus (strain ATCC 33009 / NCIMB 11132 / Bath) protein is Endoribonuclease YbeY.